Reading from the N-terminus, the 166-residue chain is MNNTDTLEKIIRHQKNKDPAYPFQEHLLMQLCIRANKRMQDNISEFLGAYGINHSVYMVLTTLFTAESHCLSPSEISQKLQFTRTNITRITDFLEKTGYVKRTDSREDRRAKKISLTSEGMFFIQRLTLAQSMYLKEIWGYLTHDEQELFEVINKKLLAHLDDVSS.

One can recognise an HTH marR-type domain in the interval 25-159; it reads EHLLMQLCIR…FEVINKKLLA (135 aa).

The protein localises to the cytoplasm. This is HTH-type transcriptional regulator PrsX (prsX) from Escherichia coli O6:H1 (strain CFT073 / ATCC 700928 / UPEC).